Reading from the N-terminus, the 258-residue chain is Acetylglutamate kinase (258 aa).

Substrate contacts are provided by residues 44–45 (GG), Arg-66, and Asn-158. Residues 181–186 (DVSGIL) and 209–211 (IIT) each bind ATP.

Belongs to the acetylglutamate kinase family. ArgB subfamily. As to quaternary structure, homodimer.

The protein localises to the cytoplasm. The catalysed reaction is N-acetyl-L-glutamate + ATP = N-acetyl-L-glutamyl 5-phosphate + ADP. It participates in amino-acid biosynthesis; L-arginine biosynthesis; N(2)-acetyl-L-ornithine from L-glutamate: step 2/4. Catalyzes the ATP-dependent phosphorylation of N-acetyl-L-glutamate. This Escherichia coli O6:K15:H31 (strain 536 / UPEC) protein is Acetylglutamate kinase.